Reading from the N-terminus, the 347-residue chain is Acetylglutamate kinase, chloroplastic (347 aa).

The N-terminal 50 residues, 1 to 50 (MATVTSNASPKSFSFTVSNPFKTLIPNKSPSLCYPTRNKNHHRLGFSIKA), are a transit peptide targeting the chloroplast. Thr51 is modified (N-acetylthreonine). Position 94 to 95 (94 to 95 (GA)) interacts with ATP. N-acetyl-L-glutamate contacts are provided by residues Gly126, Arg148, and 242 to 245 (NINA). Lys260 serves as a coordination point for L-arginine. ATP is bound by residues 265-266 (TD) and Leu271. Lys282 provides a ligand contact to L-arginine. 297–305 (KVAGGMIPK) serves as a coordination point for ATP. L-arginine-binding positions include 334–337 (EIMS) and Gly342.

It belongs to the acetylglutamate kinase family. ArgB subfamily. As to quaternary structure, interacts with GLB1. Interaction is dependent of MgATP and inhibited by 2-oxoglutarate, arginine, glutamate, citrate, and oxaloacetate.

Its subcellular location is the plastid. It is found in the chloroplast stroma. It carries out the reaction N-acetyl-L-glutamate + ATP = N-acetyl-L-glutamyl 5-phosphate + ADP. It functions in the pathway amino-acid biosynthesis; L-arginine biosynthesis; N(2)-acetyl-L-ornithine from L-glutamate: step 2/4. With respect to regulation, inhibited by arginine. Inhibition is relieved by binding to GLB1. Functionally, involved in the arginine biosynthetic pathway via the intermediate compound ornithine. This Arabidopsis thaliana (Mouse-ear cress) protein is Acetylglutamate kinase, chloroplastic.